A 300-amino-acid chain; its full sequence is Ribosomal RNA small subunit methyltransferase H (300 aa).

S-adenosyl-L-methionine is bound by residues 35–37, aspartate 55, phenylalanine 82, aspartate 100, and glutamine 107; that span reads GGH.

Belongs to the methyltransferase superfamily. RsmH family.

It is found in the cytoplasm. The enzyme catalyses cytidine(1402) in 16S rRNA + S-adenosyl-L-methionine = N(4)-methylcytidine(1402) in 16S rRNA + S-adenosyl-L-homocysteine + H(+). Specifically methylates the N4 position of cytidine in position 1402 (C1402) of 16S rRNA. This chain is Ribosomal RNA small subunit methyltransferase H, found in Chlamydia trachomatis serovar A (strain ATCC VR-571B / DSM 19440 / HAR-13).